A 328-amino-acid chain; its full sequence is Glucan endo-1,3-beta-glucosidase, basic isoform 3 (328 aa).

Catalysis depends on E85, which acts as the Proton donor. E230 functions as the Nucleophile in the catalytic mechanism. Residues 306-328 (VSERVWDISAETNSTTSSLISEM) constitute a propeptide, removed in mature form. N-linked (GlcNAc...) asparagine glycosylation occurs at N318.

This sequence belongs to the glycosyl hydrolase 17 family.

The protein resides in the vacuole. It catalyses the reaction Hydrolysis of (1-&gt;3)-beta-D-glucosidic linkages in (1-&gt;3)-beta-D-glucans.. Functionally, is thought to be an important plant defense-related product against fungal pathogens. The chain is Glucan endo-1,3-beta-glucosidase, basic isoform 3 (GLUB3) from Solanum tuberosum (Potato).